Reading from the N-terminus, the 451-residue chain is Exodeoxyribonuclease 7 large subunit (451 aa).

It belongs to the XseA family. As to quaternary structure, heterooligomer composed of large and small subunits.

The protein localises to the cytoplasm. It carries out the reaction Exonucleolytic cleavage in either 5'- to 3'- or 3'- to 5'-direction to yield nucleoside 5'-phosphates.. Its function is as follows. Bidirectionally degrades single-stranded DNA into large acid-insoluble oligonucleotides, which are then degraded further into small acid-soluble oligonucleotides. The protein is Exodeoxyribonuclease 7 large subunit of Thiobacillus denitrificans (strain ATCC 25259 / T1).